We begin with the raw amino-acid sequence, 408 residues long: Peptidase T (408 aa).

His-78 lines the Zn(2+) pocket. Residue Asp-80 is part of the active site. Asp-141 contacts Zn(2+). Residue Glu-175 is the Proton acceptor of the active site. Zn(2+) is bound by residues Glu-176, Asp-198, and His-380.

It belongs to the peptidase M20B family. Zn(2+) is required as a cofactor.

Its subcellular location is the cytoplasm. It carries out the reaction Release of the N-terminal residue from a tripeptide.. Functionally, cleaves the N-terminal amino acid of tripeptides. The polypeptide is Peptidase T (Clostridium botulinum (strain Kyoto / Type A2)).